A 386-amino-acid chain; its full sequence is Inactive GDSL esterase/lipase-like protein 23 (386 aa).

The signal sequence occupies residues Met-1–Gly-29. Ser-43 serves as the catalytic Nucleophile. Residues Asn-105, Asn-165, and Asn-288 are each glycosylated (N-linked (GlcNAc...) asparagine). Active-site residues include Asp-322 and His-325.

Belongs to the 'GDSL' lipolytic enzyme family. In terms of assembly, part of the PYK10 complex. Interacts with MVP1. In terms of tissue distribution, expressed mainly in roots.

The protein resides in the endoplasmic reticulum. Involved in the control of the PYK10 complex size and possibly substrate specificity. May be exported from the endoplasmic reticulum upon interaction with MVP1. The chain is Inactive GDSL esterase/lipase-like protein 23 (GLL23) from Arabidopsis thaliana (Mouse-ear cress).